The following is a 165-amino-acid chain: Large ribosomal subunit protein uL11 (165 aa).

At Arg-67 the chain carries N5-methylarginine.

It belongs to the universal ribosomal protein uL11 family. In terms of assembly, component of the large ribosomal subunit (LSU). Mature N.crassa ribosomes consist of a small (40S) and a large (60S) subunit. The 40S small subunit contains 1 molecule of ribosomal RNA (18S rRNA) and at least 32 different proteins. The large 60S subunit contains 3 rRNA molecules (26S, 5.8S and 5S rRNA) and at least 42 different proteins.

The protein resides in the cytoplasm. In terms of biological role, component of the ribosome, a large ribonucleoprotein complex responsible for the synthesis of proteins in the cell. The small ribosomal subunit (SSU) binds messenger RNAs (mRNAs) and translates the encoded message by selecting cognate aminoacyl-transfer RNA (tRNA) molecules. The large subunit (LSU) contains the ribosomal catalytic site termed the peptidyl transferase center (PTC), which catalyzes the formation of peptide bonds, thereby polymerizing the amino acids delivered by tRNAs into a polypeptide chain. The nascent polypeptides leave the ribosome through a tunnel in the LSU and interact with protein factors that function in enzymatic processing, targeting, and the membrane insertion of nascent chains at the exit of the ribosomal tunnel. In Neurospora crassa (strain ATCC 24698 / 74-OR23-1A / CBS 708.71 / DSM 1257 / FGSC 987), this protein is Large ribosomal subunit protein uL11 (rpl-12).